Consider the following 336-residue polypeptide: Dihydroorotate dehydrogenase (quinone) (336 aa).

FMN-binding positions include 62–66 (AGLDK) and Thr86. Substrate is bound at residue Lys66. 111-115 (NRMGF) is a binding site for substrate. Residues Asn139 and Asn172 each coordinate FMN. Asn172 is a binding site for substrate. Ser175 serves as the catalytic Nucleophile. Residue Asn177 coordinates substrate. Residues Lys217 and Thr245 each contribute to the FMN site. Residue 246 to 247 (NT) participates in substrate binding. FMN is bound by residues Gly268, Gly297, and 318-319 (YS).

The protein belongs to the dihydroorotate dehydrogenase family. Type 2 subfamily. As to quaternary structure, monomer. The cofactor is FMN.

It is found in the cell membrane. The enzyme catalyses (S)-dihydroorotate + a quinone = orotate + a quinol. It participates in pyrimidine metabolism; UMP biosynthesis via de novo pathway; orotate from (S)-dihydroorotate (quinone route): step 1/1. In terms of biological role, catalyzes the conversion of dihydroorotate to orotate with quinone as electron acceptor. The chain is Dihydroorotate dehydrogenase (quinone) from Vibrio atlanticus (strain LGP32) (Vibrio splendidus (strain Mel32)).